The sequence spans 658 residues: Threonine--tRNA ligase (658 aa).

A TGS domain is found at Met-1–Gln-61. The tract at residues Asp-259 to Pro-554 is catalytic. Zn(2+) contacts are provided by Cys-353, His-404, and His-531.

The protein belongs to the class-II aminoacyl-tRNA synthetase family. As to quaternary structure, homodimer. It depends on Zn(2+) as a cofactor.

It localises to the cytoplasm. It carries out the reaction tRNA(Thr) + L-threonine + ATP = L-threonyl-tRNA(Thr) + AMP + diphosphate + H(+). Its function is as follows. Catalyzes the attachment of threonine to tRNA(Thr) in a two-step reaction: L-threonine is first activated by ATP to form Thr-AMP and then transferred to the acceptor end of tRNA(Thr). Also edits incorrectly charged L-seryl-tRNA(Thr). The polypeptide is Threonine--tRNA ligase (Streptomyces avermitilis (strain ATCC 31267 / DSM 46492 / JCM 5070 / NBRC 14893 / NCIMB 12804 / NRRL 8165 / MA-4680)).